A 131-amino-acid chain; its full sequence is Classical arabinogalactan protein 1 (131 aa).

An N-terminal signal peptide occupies residues 1–22; sequence MAFSKSLVFVLLAALLISSAVA. The segment at 22–110 is disordered; the sequence is AQSPAPAPSN…APGPAQGGAV (89 aa). The segment covering 50 to 60 has biased composition (pro residues); that stretch reads APAPEVSPSPS. A compositionally biased stretch (low complexity) spans 61–72; that stretch reads PAAALTPESSAS. Gly108 is lipidated: GPI-anchor amidated glycine. Residues 109–131 constitute a propeptide, removed in mature form; sequence AVSNKFASFGSVAVMLTAAVLVI.

It belongs to the classical AGP family. Post-translationally, O-glycosylated on the hydroxyproline residues. Predominantly expressed in flowers and at a lower level in roots and leaves.

Its subcellular location is the cell membrane. Its function is as follows. Proteoglycan that seems to be implicated in diverse developmental roles such as differentiation, cell-cell recognition, embryogenesis and programmed cell death. The chain is Classical arabinogalactan protein 1 (AGP1) from Arabidopsis thaliana (Mouse-ear cress).